The following is a 142-amino-acid chain: AP-2 complex subunit sigma (142 aa).

Belongs to the adaptor complexes small subunit family. In terms of assembly, adaptor protein complex 2 (AP-2) is a heterotetramer composed of two large adaptins (alpha-type and beta-type subunits), a medium adaptin (mu-type subunit AP50) and a small adaptin (sigma-type subunit AP17).

The protein localises to the cell membrane. The protein resides in the membrane. Its subcellular location is the coated pit. Functionally, component of the adaptor complexes which link clathrin to receptors in coated vesicles. Clathrin-associated protein complexes are believed to interact with the cytoplasmic tails of membrane proteins, leading to their selection and concentration. This Dictyostelium discoideum (Social amoeba) protein is AP-2 complex subunit sigma (ap2s1).